The primary structure comprises 488 residues: Stress activated transcription factor atfs-1 (488 aa).

The transit peptide at 1-23 directs the protein to the mitochondrion; sequence MFSRVGRLTTFGAQAVSNCPFRR. The tract at residues 138–191 is disordered; that stretch reads SWQNGSSVGHPHGHQQQQQTCQQPPTHSSTTETMHDFSNFGDNMGSPLFQSPSK. Positions 142–168 are enriched in low complexity; that stretch reads GSSVGHPHGHQQQQQTCQQPPTHSSTT. Residue Lys342 forms a Glycyl lysine isopeptide (Lys-Gly) (interchain with G-Cter in smo-1) linkage. A disordered region spans residues 353 to 400; that stretch reads QRDDDDEDYIPASEARRTSSRLNRKSATPTYLRRRDSERSWTPASDDY. A bZIP domain is found at 420–483; the sequence is DEETDRRRML…NSMKKELRKM (64 aa). Residues 425-460 are basic motif; that stretch reads RRRMLNRIAAVRYREKKRAEKKGRKMEFQEVADRNR. The short motif at 436-441 is the Nuclear localization signal element; the sequence is RYREKK. Residues 462 to 469 are leucine-zipper; sequence LLQKERQL.

This sequence belongs to the bZIP family. Post-translationally, may be desumoylated by ulp-4. In terms of tissue distribution, ubiquitously expressed.

Its subcellular location is the mitochondrion matrix. The protein resides in the cytoplasm. It is found in the nucleus. Acts as a transcription factor during mitochondrial stress by activating the mitochondrial unfolded protein response (mtUPR). Induces nuclear and mitochondrial gene transcription, including genes coding for mitochondrial chaperones and proteins involved in glycolysis, amino acid catabolism and innate immunity. Following mitochondrial stress, restores mitochondrial respiratory capacity by limiting the transcription of oxidative phosphorylation (OXPHOS) machinery genes and by promoting the assembly of OXPHOS complexes via the up-regulation of chaperone and assembly factor genes. Component of a feedback loop involving atfs-1, atgl-1 and hlh-11. Acts together with flp-7 to negatively regulate the expression of the transcription regulator hlh-11, to promote expression of atgl-1, and thus atgl-1-dependent fat oxidation in response to mitochondrial stress. In addition, functions with hlh-11 to maintain lifespan. Promotes mtDNA maintenance and propagation of deleterious mtDNA. This Caenorhabditis elegans protein is Stress activated transcription factor atfs-1.